The sequence spans 298 residues: Olfactory receptor 5AK3 (298 aa).

Topologically, residues 1–25 are extracellular; it reads MGRGNSTEVTEFHLLGFGVQHEFQH. N-linked (GlcNAc...) asparagine glycosylation occurs at N5. A helical transmembrane segment spans residues 26 to 46; it reads VLFIVLLLIYVTSLIGNIGMI. Over 47–54 the chain is Cytoplasmic; the sequence is LLIKTDSR. Residues 55–75 traverse the membrane as a helical segment; the sequence is LQTPMYFFPQHLAFVDICYTS. Residues 76–99 are Extracellular-facing; the sequence is AITPKMLQSFTEENNLITFRGCVI. C97 and C189 are disulfide-bonded. Residues 100 to 120 traverse the membrane as a helical segment; that stretch reads QFLVYATFATSDCYLLAIMAM. Topologically, residues 121–133 are cytoplasmic; that stretch reads DCYVAICKPLRYP. Residues 134 to 154 form a helical membrane-spanning segment; the sequence is MIMSQTVYIQLVAGSYIIGSI. N-linked (GlcNAc...) asparagine glycosylation is present at N155. Residues 155–196 lie on the Extracellular side of the membrane; it reads NASVHTGFTFSLSFCKSNKINHFFCDGLPILALSCSNIDINI. The helical transmembrane segment at 197 to 217 threads the bilayer; that stretch reads ILDVVFVGFDLMFTELVIIFS. Residues 218-237 lie on the Cytoplasmic side of the membrane; the sequence is YIYIMVTILKMSSTAGRKKS. The chain crosses the membrane as a helical span at residues 238–258; the sequence is FSTCASHLTAVTIFYGTLSYM. Residues 259-271 lie on the Extracellular side of the membrane; sequence YLQPQSNNSQENM. N-linked (GlcNAc...) asparagine glycosylation is present at N265. A helical membrane pass occupies residues 272-292; the sequence is KVASIFYGTVIPMLNPLIYSL. Over 293 to 298 the chain is Cytoplasmic; sequence RNKEGK.

This sequence belongs to the G-protein coupled receptor 1 family.

The protein resides in the cell membrane. In terms of biological role, odorant receptor. This chain is Olfactory receptor 5AK3 (OR5AK3P), found in Homo sapiens (Human).